Consider the following 299-residue polypeptide: ATP phosphoribosyltransferase (299 aa).

Belongs to the ATP phosphoribosyltransferase family. Long subfamily. Mg(2+) serves as cofactor.

Its subcellular location is the cytoplasm. The enzyme catalyses 1-(5-phospho-beta-D-ribosyl)-ATP + diphosphate = 5-phospho-alpha-D-ribose 1-diphosphate + ATP. It functions in the pathway amino-acid biosynthesis; L-histidine biosynthesis; L-histidine from 5-phospho-alpha-D-ribose 1-diphosphate: step 1/9. Its activity is regulated as follows. Feedback inhibited by histidine. Its function is as follows. Catalyzes the condensation of ATP and 5-phosphoribose 1-diphosphate to form N'-(5'-phosphoribosyl)-ATP (PR-ATP). Has a crucial role in the pathway because the rate of histidine biosynthesis seems to be controlled primarily by regulation of HisG enzymatic activity. The polypeptide is ATP phosphoribosyltransferase (Shewanella pealeana (strain ATCC 700345 / ANG-SQ1)).